The chain runs to 247 residues: Cell division protein ZapD (247 aa).

Belongs to the ZapD family. Interacts with FtsZ.

Its subcellular location is the cytoplasm. Cell division factor that enhances FtsZ-ring assembly. Directly interacts with FtsZ and promotes bundling of FtsZ protofilaments, with a reduction in FtsZ GTPase activity. In Escherichia fergusonii (strain ATCC 35469 / DSM 13698 / CCUG 18766 / IAM 14443 / JCM 21226 / LMG 7866 / NBRC 102419 / NCTC 12128 / CDC 0568-73), this protein is Cell division protein ZapD.